A 114-amino-acid chain; its full sequence is MKPTRQSSIHCADCARAALRLPRNSGRALIWIYRHTLSPLVGFNCRHLPTCSVYGDEAIERFGLWGGGWMTLARLLRCQPWGTSGIDNVPATKPPGASWYRPWRYGRWRGVNAP.

The protein belongs to the UPF0161 family.

The protein resides in the cell inner membrane. Could be involved in insertion of integral membrane proteins into the membrane. This Nitrobacter hamburgensis (strain DSM 10229 / NCIMB 13809 / X14) protein is Putative membrane protein insertion efficiency factor.